The following is a 425-amino-acid chain: D-amino acid dehydrogenase 2 (425 aa).

3–17 (ITVVGAGIVGISTAY) is an FAD binding site.

The protein belongs to the DadA oxidoreductase family. It depends on FAD as a cofactor.

It catalyses the reaction a D-alpha-amino acid + A + H2O = a 2-oxocarboxylate + AH2 + NH4(+). Functionally, oxidative deamination of D-amino acids. The polypeptide is D-amino acid dehydrogenase 2 (dadA2) (Ralstonia nicotianae (strain ATCC BAA-1114 / GMI1000) (Ralstonia solanacearum)).